The primary structure comprises 771 residues: Phosphoglycerate kinase (771 aa).

Residues 1-406 (MKKLITDLNL…PGIDAIQNYE (406 aa)) form a phosphoglycerate kinase region. Residues 20–22 (DLN), arginine 35, 58–61 (HLGR), arginine 118, and arginine 155 contribute to the substrate site. ATP-binding positions include lysine 206, glycine 295, glutamate 334, and 361 to 364 (GGDS). The segment at 407–771 (QTYEQYDSQV…KRFWFFGRKR (365 aa)) is unknown.

The protein in the N-terminal section; belongs to the phosphoglycerate kinase family. In terms of assembly, monomer.

It localises to the cytoplasm. The catalysed reaction is (2R)-3-phosphoglycerate + ATP = (2R)-3-phospho-glyceroyl phosphate + ADP. It participates in carbohydrate degradation; glycolysis; pyruvate from D-glyceraldehyde 3-phosphate: step 2/5. The polypeptide is Phosphoglycerate kinase (pgk) (Mycoplasmopsis pulmonis (strain UAB CTIP) (Mycoplasma pulmonis)).